The chain runs to 334 residues: N-acetylmuramoyl-L-alanine amidase sle1 (334 aa).

Residues 1-25 form the signal peptide; the sequence is MQKKVIAAIIGTSAISAVAATQANA. The LysM 1 domain maps to 27 to 70; it reads TTHTVKPGESVWAISNKYGISIAKLKSLNNLTSNLIFPNQVLKV. Low complexity predominate over residues 71–86; the sequence is SGSSNSTSNSSRPSTN. Residues 71 to 90 are disordered; the sequence is SGSSNSTSNSSRPSTNSGGG. LysM domains follow at residues 91–134 and 158–201; these read SYYT…KLKV. Positions 210 to 334 constitute a Peptidase C51 domain; sequence GSATTTNRGY…YQVNNYRYIH (125 aa).

The protein localises to the secreted. Its subcellular location is the cell surface. It catalyses the reaction Hydrolyzes the link between N-acetylmuramoyl residues and L-amino acid residues in certain cell-wall glycopeptides.. In terms of biological role, peptidoglycan hydrolase involved in the splitting of the septum during cell division. The polypeptide is N-acetylmuramoyl-L-alanine amidase sle1 (sle1) (Staphylococcus aureus (strain USA300)).